A 657-amino-acid polypeptide reads, in one-letter code: Glycogen debranching enzyme (657 aa).

Asp-336 serves as the catalytic Nucleophile. Residue Glu-371 is the Proton donor of the active site. Over residues 458 to 467 (NEANGEENRD) the composition is skewed to basic and acidic residues. The disordered stretch occupies residues 458-479 (NEANGEENRDGTNNNYSNNHGK).

The protein belongs to the glycosyl hydrolase 13 family.

It catalyses the reaction Hydrolysis of (1-&gt;6)-alpha-D-glucosidic linkages to branches with degrees of polymerization of three or four glucose residues in limit dextrin.. The protein operates within glycan degradation; glycogen degradation. Functionally, removes maltotriose and maltotetraose chains that are attached by 1,6-alpha-linkage to the limit dextrin main chain, generating a debranched limit dextrin. In Escherichia coli (strain SE11), this protein is Glycogen debranching enzyme.